Consider the following 903-residue polypeptide: Protein translocase subunit SecA (903 aa).

ATP is bound by residues glutamine 89, 107 to 111 (GEGKT), and aspartate 502. Positions 886, 888, 897, and 898 each coordinate Zn(2+).

The protein belongs to the SecA family. Monomer and homodimer. Part of the essential Sec protein translocation apparatus which comprises SecA, SecYEG and auxiliary proteins SecDF-YajC and YidC. Zn(2+) serves as cofactor.

Its subcellular location is the cell inner membrane. The protein resides in the cytoplasm. It catalyses the reaction ATP + H2O + cellular proteinSide 1 = ADP + phosphate + cellular proteinSide 2.. Part of the Sec protein translocase complex. Interacts with the SecYEG preprotein conducting channel. Has a central role in coupling the hydrolysis of ATP to the transfer of proteins into and across the cell membrane, serving both as a receptor for the preprotein-SecB complex and as an ATP-driven molecular motor driving the stepwise translocation of polypeptide chains across the membrane. The chain is Protein translocase subunit SecA from Sinorhizobium medicae (strain WSM419) (Ensifer medicae).